We begin with the raw amino-acid sequence, 369 residues long: Biglycan (369 aa).

The N-terminal stretch at 1 to 16 is a signal peptide; that stretch reads MRPLWLLTLLLALSQA. A propeptide spanning residues 17–37 is cleaved from the precursor; it reads LPFEQKGFWDFTLDDGLLMMN. O-linked (Xyl...) (glycosaminoglycan) serine glycans are attached at residues Ser42 and Ser48. 2 disulfide bridges follow: Cys64–Cys70 and Cys68–Cys77. 12 LRR repeats span residues 83-103, 104-127, 128-151, 152-172, 173-196, 197-221, 222-242, 243-266, 267-290, 291-313, 314-343, and 344-369; these read KTVPKEISPDTTLLDLQNNDI, SELRKDDFKGLQHLYALVLVNNKI, SKIHEKAFSPLRKLQKLYISKNHL, VEIPPNLPSSLVELRIHDNRI, RKVPKGVFSGLRNMNCIEMGGNPL, ENSGFEPGAFDGLKLNYLRISEAKL, TGIPKDLPETLNELHLDHNKI, QAIELEDLLRYSKLYRLGLGHNQI, RMIENGSLSFLPTLRELHLDNNKL, SRVPAGLPDLKLLQVVYLHSNNI, TKVGINDFCPMGFGVKRAYYNGISLFNNPV, and PYWEVQPATFRCVTDRLAIQFGNYKK. Asn271 and Asn312 each carry an N-linked (GlcNAc...) asparagine glycan. Cys322 and Cys355 are disulfide-bonded.

The protein belongs to the small leucine-rich proteoglycan (SLRP) family. SLRP class I subfamily. In terms of assembly, homodimer. Forms a ternary complex with MFAP2 and ELN. In terms of processing, the two attached glycosaminoglycan chains can be either chondroitin sulfate or dermatan sulfate. As to expression, found in several connective tissues, especially in articular cartilages.

It localises to the secreted. Its subcellular location is the extracellular space. The protein localises to the extracellular matrix. In terms of biological role, may be involved in collagen fiber assembly. This Rattus norvegicus (Rat) protein is Biglycan (Bgn).